We begin with the raw amino-acid sequence, 525 residues long: GMP synthase [glutamine-hydrolyzing] (525 aa).

The 199-residue stretch at 9 to 207 (RILILDFGSQ…VRDICQCEAL (199 aa)) folds into the Glutamine amidotransferase type-1 domain. Residue Cys86 is the Nucleophile of the active site. Active-site residues include His181 and Glu183. The GMPS ATP-PPase domain occupies 208-400 (WTPAKIIDDA…LGLPYDMLYR (193 aa)). 235–241 (SGGVDSS) contributes to the ATP binding site.

Homodimer.

It catalyses the reaction XMP + L-glutamine + ATP + H2O = GMP + L-glutamate + AMP + diphosphate + 2 H(+). Its pathway is purine metabolism; GMP biosynthesis; GMP from XMP (L-Gln route): step 1/1. In terms of biological role, catalyzes the synthesis of GMP from XMP. This Shigella flexneri serotype 5b (strain 8401) protein is GMP synthase [glutamine-hydrolyzing].